The primary structure comprises 208 residues: Ribonuclease HII (208 aa).

The region spanning 5-198 (PLIAGVDEVG…CQPRLEHDCR (194 aa)) is the RNase H type-2 domain. Positions 11, 12, and 106 each coordinate a divalent metal cation.

It belongs to the RNase HII family. Requires Mn(2+) as cofactor. It depends on Mg(2+) as a cofactor.

It localises to the cytoplasm. It carries out the reaction Endonucleolytic cleavage to 5'-phosphomonoester.. Its function is as follows. Endonuclease that specifically degrades the RNA of RNA-DNA hybrids. The sequence is that of Ribonuclease HII from Microcystis aeruginosa (strain NIES-843 / IAM M-2473).